We begin with the raw amino-acid sequence, 1141 residues long: DNA-directed RNA polymerase subunit beta (1141 aa).

Belongs to the RNA polymerase beta chain family. In terms of assembly, the RNAP catalytic core consists of 2 alpha, 1 beta, 1 beta' and 1 omega subunit. When a sigma factor is associated with the core the holoenzyme is formed, which can initiate transcription.

It catalyses the reaction RNA(n) + a ribonucleoside 5'-triphosphate = RNA(n+1) + diphosphate. In terms of biological role, DNA-dependent RNA polymerase catalyzes the transcription of DNA into RNA using the four ribonucleoside triphosphates as substrates. This chain is DNA-directed RNA polymerase subunit beta, found in Frankia casuarinae (strain DSM 45818 / CECT 9043 / HFP020203 / CcI3).